Reading from the N-terminus, the 221-residue chain is uncharacterized protein (221 aa).

An N-terminal signal peptide occupies residues 1–18; the sequence is MKRFLLLIILFGISFSFV.

This is an uncharacterized protein from Aquifex aeolicus (strain VF5).